We begin with the raw amino-acid sequence, 274 residues long: Diaminopimelate epimerase (274 aa).

3 residues coordinate substrate: asparagine 11, glutamine 44, and asparagine 64. Residue cysteine 73 is the Proton donor of the active site. Residues 74-75, asparagine 157, asparagine 190, and 208-209 contribute to the substrate site; these read GN and ER. Cysteine 217 (proton acceptor) is an active-site residue. Residue 218–219 coordinates substrate; the sequence is GT.

The protein belongs to the diaminopimelate epimerase family. As to quaternary structure, homodimer.

Its subcellular location is the cytoplasm. It carries out the reaction (2S,6S)-2,6-diaminopimelate = meso-2,6-diaminopimelate. The protein operates within amino-acid biosynthesis; L-lysine biosynthesis via DAP pathway; DL-2,6-diaminopimelate from LL-2,6-diaminopimelate: step 1/1. Catalyzes the stereoinversion of LL-2,6-diaminopimelate (L,L-DAP) to meso-diaminopimelate (meso-DAP), a precursor of L-lysine and an essential component of the bacterial peptidoglycan. This chain is Diaminopimelate epimerase, found in Blochmanniella pennsylvanica (strain BPEN).